We begin with the raw amino-acid sequence, 199 residues long: Recombination protein RecR (199 aa).

The C4-type zinc finger occupies 56-71 (CQRCNTFTEGDICERC). The region spanning 79–174 (ELLCVVETPV…GVTRIARGVP (96 aa)) is the Toprim domain.

The protein belongs to the RecR family.

In terms of biological role, may play a role in DNA repair. It seems to be involved in an RecBC-independent recombinational process of DNA repair. It may act with RecF and RecO. The protein is Recombination protein RecR of Dechloromonas aromatica (strain RCB).